A 90-amino-acid polypeptide reads, in one-letter code: Putative ATPase inhibitor, mitochondrial (90 aa).

Positions 42–89 (ESREKAKEDFFVHQHEIEQLRKLKESLKLHREELDELESRVDKKMKSN) form a coiled coil.

Belongs to the ATPase inhibitor family.

Its subcellular location is the mitochondrion. Its function is as follows. Forms a one-to-one complex with ATPase to inhibit the enzyme activity completely. This chain is Putative ATPase inhibitor, mitochondrial (inh1), found in Schizosaccharomyces pombe (strain 972 / ATCC 24843) (Fission yeast).